The primary structure comprises 882 residues: Ion channel DMI1 (882 aa).

A disordered region spans residues 1 to 122; the sequence is MAKSNEESSN…PSSSSITKQQ (122 aa). The span at 48 to 62 shows a compositional bias: polar residues; sequence TSTTKTDFSEQQWNY. Pro residues predominate over residues 78-95; that stretch reads PPPPPSKPPVNLIPPHPR. Over residues 107–117 the composition is skewed to low complexity; it reads SSLLPQPSSSS. 4 helical membrane passes run 129-149, 192-212, 255-275, and 307-327; these read SPIF…SAYL, TIAL…YKYL, LALL…LYAV, and IVSV…LGLV. 2 RCK N-terminal domains span residues 348-489 and 608-757; these read RNHV…ETVV and PEKI…DKSI. Residues 378 to 403 are a coiled coil; the sequence is VIVVLAEKEKEEMEMDIAKLEFDFMG.

This sequence belongs to the castor/pollux (TC 1.A.1.23) family. As to quaternary structure, interacts (via c-terminus) with CNGC15A, CNGC15B and CNGC15C (via N-terminus). The Nod factor has no effect on these interactions, implying that the complex is maintained after activation. In terms of tissue distribution, mainly expressed in roots and nodules. Also detected in pods, flowers, leaves, and stems.

It is found in the nucleus membrane. Its function is as follows. Required for early signal transduction events leading to endosymbiosis. Acts early in a signal transduction chain leading from the perception of Nod factor to the activation of calcium spiking. Also involved in mycorrhizal symbiosis. May be involved in the regulation of the calcium channel responsible for calcium spiking by mobilizing another cation, and thereby altering the membrane potential. This chain is Ion channel DMI1, found in Medicago truncatula (Barrel medic).